The sequence spans 243 residues: Terpene cyclase paxB (243 aa).

7 helical membrane passes run 23 to 43 (FVVG…YISF), 49 to 69 (GMSI…CLVF), 78 to 98 (GVFW…ITFS), 112 to 132 (ISLI…ALAL), 134 to 154 (IGPA…LSVG), 172 to 194 (LWAS…WMYW), and 205 to 225 (LVLW…ICFW).

The protein belongs to the paxB family.

Its subcellular location is the membrane. Its pathway is secondary metabolite biosynthesis. In terms of biological role, terpene cyclase; part of the ATM2 gene cluster that mediates the biosynthesis of paxilline, a mycotoxin that acts as an inhibitor of mammalian maxi-K channels. PaxG, the geranylgeranyl diphosphate (GGPP) synthase is proposed to catalyze the first step in paxilline biosynthesis. Condensation of indole-3-glycerol phosphate with GGPP by paxC then forms 3-geranylgeranylindole (3-GGI), followed by epoxidation and cyclization of this intermediate (by paxM and paxB) to form paspaline. Paspaline is subsequently converted to 13-desoxypaxilline by paxP, the latter being then converted to paxilline by paxQ. Finally paxilline can be mono- and di-prenylated by paxD. In Penicillium paxilli, this protein is Terpene cyclase paxB.